Here is a 77-residue protein sequence, read N- to C-terminus: Acyl carrier protein (77 aa).

One can recognise a Carrier domain in the interval 1–76 (MSVEQRVKEI…DVLDYIKSKQ (76 aa)). At Ser-36 the chain carries O-(pantetheine 4'-phosphoryl)serine.

This sequence belongs to the acyl carrier protein (ACP) family. Post-translationally, 4'-phosphopantetheine is transferred from CoA to a specific serine of apo-ACP by AcpS. This modification is essential for activity because fatty acids are bound in thioester linkage to the sulfhydryl of the prosthetic group.

It localises to the cytoplasm. It functions in the pathway lipid metabolism; fatty acid biosynthesis. Functionally, carrier of the growing fatty acid chain in fatty acid biosynthesis. In Sulfurihydrogenibium sp. (strain YO3AOP1), this protein is Acyl carrier protein.